The chain runs to 308 residues: Ornithine carbamoyltransferase (308 aa).

Residues 57-60 (STRT), glutamine 84, arginine 108, and 135-138 (HPCQ) each bind carbamoyl phosphate. L-ornithine is bound by residues asparagine 166, aspartate 224, and 228–229 (SM). Residues 264-265 (CL) and arginine 292 contribute to the carbamoyl phosphate site.

The protein belongs to the aspartate/ornithine carbamoyltransferase superfamily. OTCase family.

It localises to the cytoplasm. The enzyme catalyses carbamoyl phosphate + L-ornithine = L-citrulline + phosphate + H(+). The protein operates within amino-acid degradation; L-arginine degradation via ADI pathway; carbamoyl phosphate from L-arginine: step 2/2. Functionally, reversibly catalyzes the transfer of the carbamoyl group from carbamoyl phosphate (CP) to the N(epsilon) atom of ornithine (ORN) to produce L-citrulline. This Ralstonia pickettii (strain 12J) protein is Ornithine carbamoyltransferase.